Here is a 240-residue protein sequence, read N- to C-terminus: DUP240 protein DFP1 (240 aa).

A disordered region spans residues 1-29; that stretch reads MQPYLKKNTHATDDPKASPLKEGSPDNPE. The next 2 membrane-spanning stretches (helical) occupy residues 61–81 and 84–104; these read IMINFLLFVVTILATLTDIWF and VLSPAMVIRICLGGSMVVLQI.

This sequence belongs to the DUP/COS family.

It is found in the membrane. This is DUP240 protein DFP1 from Saccharomyces cerevisiae (Baker's yeast).